The primary structure comprises 478 residues: UDP-N-acetylmuramate--L-alanine ligase (478 aa).

126-132 (GTHGKTT) provides a ligand contact to ATP.

It belongs to the MurCDEF family.

Its subcellular location is the cytoplasm. The enzyme catalyses UDP-N-acetyl-alpha-D-muramate + L-alanine + ATP = UDP-N-acetyl-alpha-D-muramoyl-L-alanine + ADP + phosphate + H(+). The protein operates within cell wall biogenesis; peptidoglycan biosynthesis. In terms of biological role, cell wall formation. This is UDP-N-acetylmuramate--L-alanine ligase from Synechococcus sp. (strain JA-2-3B'a(2-13)) (Cyanobacteria bacterium Yellowstone B-Prime).